The primary structure comprises 822 residues: IQ and AAA domain-containing protein 1-like (822 aa).

Residues 206 to 235 (QDQGAIVIQKVWKGYLQRKRIEQDRRMEME) form the IQ domain. Positions 338–363 (RQELEAQAQENKKKEQEKNKDKVKEK) are enriched in basic and acidic residues. Disordered stretches follow at residues 338–378 (RQEL…KAKK) and 457–484 (REET…KDLT). Residues 464–479 (KSPKKKGGKKSGKKKK) are compositionally biased toward basic residues. ATP is bound at residue 569 to 576 (GPSGMGKK).

The protein belongs to the AAA ATPase family.

The protein is IQ and AAA domain-containing protein 1-like (Iqca1l) of Rattus norvegicus (Rat).